The following is a 251-amino-acid chain: Transcriptional regulator CBF1 (251 aa).

A disordered region spans residues Met-1–Asn-169. A compositionally biased stretch (basic and acidic residues) spans Arg-7–Asp-28. Low complexity predominate over residues Ala-40 to Val-56. The segment covering Thr-67 to Ala-76 has biased composition (polar residues). Residues Leu-77–Lys-105 show a composition bias toward basic and acidic residues. A compositionally biased stretch (polar residues) spans Gln-107–Asp-116. The span at Gln-117–Gln-126 shows a compositional bias: low complexity. The span at Leu-127 to Ala-140 shows a compositional bias: polar residues. Residues His-144–Ser-167 show a composition bias toward basic and acidic residues. Positions Gln-152–Leu-200 constitute a bHLH domain. The stretch at Leu-190 to Ser-223 forms a coiled coil.

It localises to the nucleus. In terms of biological role, transcription factor that binds ribosomal protein gene promoters and rDNA locus with TBF1. Necessary for the expression of genes involved in assimilation of inorganic sulfate. Also required for the expression of respiratory genes and glycolytic genes. Does not bind to centromeres and is not necessary for efficient chromosome segregationas as does S.cerevisiae CBF1. In Candida albicans (strain SC5314 / ATCC MYA-2876) (Yeast), this protein is Transcriptional regulator CBF1 (CBF1).